The following is a 790-amino-acid chain: Cadherin-6 (790 aa).

An N-terminal signal peptide occupies residues 1–18 (MRTYRYFLLLFWVGQPYP). Residues 19 to 53 (TFSNPLSKRTSGFPAKRKALELSANSRNELSRSKR) constitute a propeptide that is removed on maturation. Cadherin domains are found at residues 54–159 (SWMW…EPIF), 160–268 (TKDV…PPRF), 269–383 (PQST…PPVF), 384–486 (SKLA…DNAP), and 487–608 (EFAE…LIHP). The Extracellular segment spans residues 54–615 (SWMWNQFFLL…IHPTGLSTGA (562 aa)). The N-linked (GlcNAc...) asparagine glycan is linked to Asn255. A disordered region spans residues 260-291 (DVNDNPPRFPQSTYQFKTPESSPPGTPIGRIK). Over residues 269–279 (PQSTYQFKTPE) the composition is skewed to polar residues. Residues Asn399, Asn437, Asn455, and Asn536 are each glycosylated (N-linked (GlcNAc...) asparagine). Residues 616–636 (LVAILLCIVILLVTVVLFAAL) form a helical membrane-spanning segment. Over 637 to 790 (RRQRKKEPLI…YGGMDSDKDS (154 aa)) the chain is Cytoplasmic. Phosphoserine occurs at positions 786 and 790.

It localises to the cell membrane. Cadherins are calcium-dependent cell adhesion proteins. They preferentially interact with themselves in a homophilic manner in connecting cells; cadherins may thus contribute to the sorting of heterogeneous cell types. The protein is Cadherin-6 (Cdh6) of Mus musculus (Mouse).